Here is a 321-residue protein sequence, read N- to C-terminus: D-alanine--D-alanine ligase (321 aa).

The 195-residue stretch at 121-315 (RSWFLTNNIN…FVNLIEEILK (195 aa)) folds into the ATP-grasp domain. 148 to 199 (IKRPYVIKPFTQGSSIGVEVIFEEDDFNFANYDFPYGDEVIIEKYIKGRELQ) contacts ATP. Mg(2+) contacts are provided by E268, E282, and N284.

It belongs to the D-alanine--D-alanine ligase family. Mg(2+) serves as cofactor. Requires Mn(2+) as cofactor.

The protein localises to the cytoplasm. It carries out the reaction 2 D-alanine + ATP = D-alanyl-D-alanine + ADP + phosphate + H(+). It participates in cell wall biogenesis; peptidoglycan biosynthesis. Cell wall formation. The protein is D-alanine--D-alanine ligase of Rickettsia bellii (strain RML369-C).